We begin with the raw amino-acid sequence, 396 residues long: Bifunctional enzyme Fae/Hps (396 aa).

The segment at 1–161 (MMLIGEALIG…HEKDRAAHAV (161 aa)) is formaldehyde-activating enzyme. His17 (proton donor) is an active-site residue. The substrate site is built by Asp19, Leu48, Lys66, Thr68, and Gln83. The 3-hexulose-6-phosphate synthase stretch occupies residues 162–396 (MGFKISKLWD…IDQFRIMTDF (235 aa)).

In the N-terminal section; belongs to the formaldehyde-activating enzyme family. The protein in the C-terminal section; belongs to the HPS/KGPDC family. HPS subfamily.

The enzyme catalyses 5,6,7,8-tetrahydromethanopterin + formaldehyde = 5,10-methylenetetrahydromethanopterin + H2O. The catalysed reaction is D-ribulose 5-phosphate + formaldehyde = D-arabino-hex-3-ulose 6-phosphate. Its pathway is carbohydrate biosynthesis; D-ribose 5-phosphate biosynthesis. Catalyzes the condensation of formaldehyde with tetrahydromethanopterin (H(4)MPT) to 5,10-methylenetetrahydromethanopterin. Its function is as follows. Catalyzes the reversible formation of ribulose-5-phosphate and formaldehyde from 3-hexulose-6-phosphate. This is Bifunctional enzyme Fae/Hps from Methanococcoides burtonii (strain DSM 6242 / NBRC 107633 / OCM 468 / ACE-M).